Reading from the N-terminus, the 286-residue chain is UDP-3-O-acyl-N-acetylglucosamine deacetylase (286 aa).

Zn(2+) contacts are provided by histidine 79, histidine 237, and aspartate 241. The Proton donor role is filled by histidine 264.

Belongs to the LpxC family. Zn(2+) is required as a cofactor.

It catalyses the reaction a UDP-3-O-[(3R)-3-hydroxyacyl]-N-acetyl-alpha-D-glucosamine + H2O = a UDP-3-O-[(3R)-3-hydroxyacyl]-alpha-D-glucosamine + acetate. The protein operates within glycolipid biosynthesis; lipid IV(A) biosynthesis; lipid IV(A) from (3R)-3-hydroxytetradecanoyl-[acyl-carrier-protein] and UDP-N-acetyl-alpha-D-glucosamine: step 2/6. Catalyzes the hydrolysis of UDP-3-O-myristoyl-N-acetylglucosamine to form UDP-3-O-myristoylglucosamine and acetate, the committed step in lipid A biosynthesis. The protein is UDP-3-O-acyl-N-acetylglucosamine deacetylase of Chlamydia trachomatis serovar A (strain ATCC VR-571B / DSM 19440 / HAR-13).